Consider the following 578-residue polypeptide: 2-succinyl-5-enolpyruvyl-6-hydroxy-3-cyclohexene-1-carboxylate synthase (578 aa).

Positions 186–208 (LPAAGGEHHPAEPRSTPWDGPVP) are disordered.

This sequence belongs to the TPP enzyme family. MenD subfamily. Homodimer. Mg(2+) is required as a cofactor. Requires Mn(2+) as cofactor. The cofactor is thiamine diphosphate.

The catalysed reaction is isochorismate + 2-oxoglutarate + H(+) = 5-enolpyruvoyl-6-hydroxy-2-succinyl-cyclohex-3-ene-1-carboxylate + CO2. It participates in quinol/quinone metabolism; 1,4-dihydroxy-2-naphthoate biosynthesis; 1,4-dihydroxy-2-naphthoate from chorismate: step 2/7. The protein operates within cofactor biosynthesis; phylloquinone biosynthesis. In terms of biological role, catalyzes the thiamine diphosphate-dependent decarboxylation of 2-oxoglutarate and the subsequent addition of the resulting succinic semialdehyde-thiamine pyrophosphate anion to isochorismate to yield 2-succinyl-5-enolpyruvyl-6-hydroxy-3-cyclohexene-1-carboxylate (SEPHCHC). This Synechococcus sp. (strain WH7803) protein is 2-succinyl-5-enolpyruvyl-6-hydroxy-3-cyclohexene-1-carboxylate synthase.